We begin with the raw amino-acid sequence, 1032 residues long: Contactin-1a (1032 aa).

A signal peptide spans 1–31 (MIPEAFQPRAMKHTTTVLMLALSSRFWSVCA). Ig-like C2-type domains lie at 46 to 139 (PVFE…ARVQ), 144 to 231 (DMFS…KSVF), 249 to 335 (PADI…THLY), 340 to 417 (PDWL…AELR), 423 to 510 (PSFQ…GSLS), and 515 to 612 (TKIT…AELV). Disulfide bonds link cysteine 70/cysteine 122 and cysteine 166/cysteine 219. N-linked (GlcNAc...) asparagine glycans are attached at residues asparagine 119, asparagine 216, and asparagine 266. 3 disulfide bridges follow: cysteine 271–cysteine 319, cysteine 361–cysteine 401, and cysteine 446–cysteine 494. 4 N-linked (GlcNAc...) asparagine glycosylation sites follow: asparagine 455, asparagine 467, asparagine 483, and asparagine 504. Cysteine 536 and cysteine 596 are disulfide-bonded. The N-linked (GlcNAc...) asparagine glycan is linked to asparagine 604. 4 consecutive Fibronectin type-III domains span residues 619-718 (PPGG…TREA), 723-820 (APSD…SAQD), 825-918 (APII…TKKS), and 920-1015 (PSRP…APAP). The interval 699–729 (NTLGTGPPSEPSPKTTTREARPIVAPSDIGG) is disordered. An N-linked (GlcNAc...) asparagine glycan is attached at asparagine 879. The segment at 907–926 (ASQRNRIYTKKSPPSRPPKI) is disordered. Residue asparagine 950 is glycosylated (N-linked (GlcNAc...) asparagine). Glycine 1010 carries GPI-anchor amidated glycine lipidation. A propeptide spans 1011–1032 (SAPAPALASALLLLPLLWTLML) (removed in mature form).

Belongs to the immunoglobulin superfamily. Contactin family. Expressed in brain.

It localises to the cell membrane. Its function is as follows. Mediates cell surface interactions during nervous system development. The polypeptide is Contactin-1a (cntn1a) (Danio rerio (Zebrafish)).